A 595-amino-acid polypeptide reads, in one-letter code: Phosphomethylpyrimidine synthase (595 aa).

Over residues 97–120 (GRDVRPEDNGFTKDDDPRAAREVF) the composition is skewed to basic and acidic residues. The disordered stretch occupies residues 97–134 (GRDVRPEDNGFTKDDDPRAAREVFPRTSSHKPLRAKKG). The span at 124–133 (SSHKPLRAKK) shows a compositional bias: basic residues. Substrate is bound by residues asparagine 202, methionine 231, tyrosine 260, histidine 296, 316–318 (SRG), 357–360 (DGLR), and glutamate 396. Histidine 400 is a Zn(2+) binding site. Tyrosine 423 serves as a coordination point for substrate. Histidine 464 is a binding site for Zn(2+). [4Fe-4S] cluster-binding residues include cysteine 544, cysteine 547, and cysteine 552.

This sequence belongs to the ThiC family. [4Fe-4S] cluster is required as a cofactor.

The enzyme catalyses 5-amino-1-(5-phospho-beta-D-ribosyl)imidazole + S-adenosyl-L-methionine = 4-amino-2-methyl-5-(phosphooxymethyl)pyrimidine + CO + 5'-deoxyadenosine + formate + L-methionine + 3 H(+). It participates in cofactor biosynthesis; thiamine diphosphate biosynthesis. Catalyzes the synthesis of the hydroxymethylpyrimidine phosphate (HMP-P) moiety of thiamine from aminoimidazole ribotide (AIR) in a radical S-adenosyl-L-methionine (SAM)-dependent reaction. This chain is Phosphomethylpyrimidine synthase, found in Halalkalibacterium halodurans (strain ATCC BAA-125 / DSM 18197 / FERM 7344 / JCM 9153 / C-125) (Bacillus halodurans).